The primary structure comprises 331 residues: DNA-directed RNA polymerase subunit alpha (331 aa).

The alpha N-terminal domain (alpha-NTD) stretch occupies residues 1–225 (MLDIAMPKLE…QYSSIIADFN (225 aa)). The segment at 243–331 (PSEIYDMPIE…AARLNDGSAE (89 aa)) is alpha C-terminal domain (alpha-CTD).

Belongs to the RNA polymerase alpha chain family. As to quaternary structure, homodimer. The RNAP catalytic core consists of 2 alpha, 1 beta, 1 beta' and 1 omega subunit. When a sigma factor is associated with the core the holoenzyme is formed, which can initiate transcription.

The enzyme catalyses RNA(n) + a ribonucleoside 5'-triphosphate = RNA(n+1) + diphosphate. Its function is as follows. DNA-dependent RNA polymerase catalyzes the transcription of DNA into RNA using the four ribonucleoside triphosphates as substrates. This Herpetosiphon aurantiacus (strain ATCC 23779 / DSM 785 / 114-95) protein is DNA-directed RNA polymerase subunit alpha.